A 238-amino-acid polypeptide reads, in one-letter code: Zinc import ATP-binding protein ZnuC (238 aa).

Residues 5–220 form the ABC transporter domain; sequence IQLNNISVNF…SEFIAIFGNI (216 aa). Residue 37 to 44 participates in ATP binding; that stretch reads GPNGAGKS.

This sequence belongs to the ABC transporter superfamily. Zinc importer (TC 3.A.1.15.5) family. In terms of assembly, the complex is composed of two ATP-binding proteins (ZnuC), two transmembrane proteins (ZnuB) and a solute-binding protein (ZnuA).

It localises to the cell membrane. It carries out the reaction Zn(2+)(out) + ATP(in) + H2O(in) = Zn(2+)(in) + ADP(in) + phosphate(in) + H(+)(in). In terms of biological role, part of the ABC transporter complex ZnuABC involved in zinc import. Responsible for energy coupling to the transport system. The sequence is that of Zinc import ATP-binding protein ZnuC from Buchnera aphidicola subsp. Baizongia pistaciae (strain Bp).